Here is a 280-residue protein sequence, read N- to C-terminus: Trypsin zeta (280 aa).

Positions Met1–Gly22 are cleaved as a signal peptide. A propeptide spans Leu23–Arg38 (activation peptide). The region spanning Ile39–Ala278 is the Peptidase S1 domain. Residues Cys72 and Cys88 are joined by a disulfide bond. Catalysis depends on charge relay system residues His87 and Asp134. Intrachain disulfides connect Cys198/Cys218 and Cys230/Cys254. The active-site Charge relay system is Ser234.

Belongs to the peptidase S1 family.

Its subcellular location is the secreted. The protein resides in the extracellular space. The catalysed reaction is Preferential cleavage: Arg-|-Xaa, Lys-|-Xaa.. The protein is Trypsin zeta (zetaTry) of Drosophila melanogaster (Fruit fly).